The following is a 108-amino-acid chain: uncharacterized protein (108 aa).

This is an uncharacterized protein from Mycoplasma pneumoniae (strain ATCC 29342 / M129 / Subtype 1) (Mycoplasmoides pneumoniae).